A 417-amino-acid polypeptide reads, in one-letter code: Serine hydroxymethyltransferase (417 aa).

(6S)-5,6,7,8-tetrahydrofolate-binding positions include L121 and 125–127 (GHL). K229 carries the post-translational modification N6-(pyridoxal phosphate)lysine. Position 355–357 (355–357 (SPF)) interacts with (6S)-5,6,7,8-tetrahydrofolate.

The protein belongs to the SHMT family. In terms of assembly, homodimer. Requires pyridoxal 5'-phosphate as cofactor.

The protein resides in the cytoplasm. It carries out the reaction (6R)-5,10-methylene-5,6,7,8-tetrahydrofolate + glycine + H2O = (6S)-5,6,7,8-tetrahydrofolate + L-serine. It functions in the pathway one-carbon metabolism; tetrahydrofolate interconversion. Its pathway is amino-acid biosynthesis; glycine biosynthesis; glycine from L-serine: step 1/1. Functionally, catalyzes the reversible interconversion of serine and glycine with tetrahydrofolate (THF) serving as the one-carbon carrier. This reaction serves as the major source of one-carbon groups required for the biosynthesis of purines, thymidylate, methionine, and other important biomolecules. Also exhibits THF-independent aldolase activity toward beta-hydroxyamino acids, producing glycine and aldehydes, via a retro-aldol mechanism. The polypeptide is Serine hydroxymethyltransferase (Xanthomonas campestris pv. campestris (strain 8004)).